Reading from the N-terminus, the 357-residue chain is tRNA pseudouridine synthase Pus10 (357 aa).

Positions 1 to 118 (MNLCRECYGI…TFTFELQIRP (118 aa)) constitute a THUMP domain. Catalysis depends on aspartate 187, which acts as the Nucleophile. Substrate-binding residues include tyrosine 251 and tyrosine 322.

It belongs to the pseudouridine synthase Pus10 family.

It catalyses the reaction uridine(54) in tRNA = pseudouridine(54) in tRNA. It carries out the reaction uridine(55) in tRNA = pseudouridine(55) in tRNA. Responsible for synthesis of pseudouridine from uracil-54 and uracil-55 in the psi GC loop of transfer RNAs. The chain is tRNA pseudouridine synthase Pus10 from Archaeoglobus fulgidus (strain ATCC 49558 / DSM 4304 / JCM 9628 / NBRC 100126 / VC-16).